Consider the following 107-residue polypeptide: L-rhamnose mutarotase (107 aa).

Y18 contacts substrate. H22 serves as the catalytic Proton donor. Substrate contacts are provided by residues Y41 and 76–77; that span reads WW.

Belongs to the rhamnose mutarotase family. As to quaternary structure, homodimer.

It localises to the cytoplasm. It catalyses the reaction alpha-L-rhamnose = beta-L-rhamnose. The protein operates within carbohydrate metabolism; L-rhamnose metabolism. In terms of biological role, involved in the anomeric conversion of L-rhamnose. This chain is L-rhamnose mutarotase, found in Paraburkholderia phytofirmans (strain DSM 17436 / LMG 22146 / PsJN) (Burkholderia phytofirmans).